A 192-amino-acid chain; its full sequence is Nucleoside triphosphate pyrophosphatase (192 aa).

Asp-73 functions as the Proton acceptor in the catalytic mechanism.

Belongs to the Maf family. A divalent metal cation serves as cofactor.

The protein resides in the cytoplasm. It carries out the reaction a ribonucleoside 5'-triphosphate + H2O = a ribonucleoside 5'-phosphate + diphosphate + H(+). The catalysed reaction is a 2'-deoxyribonucleoside 5'-triphosphate + H2O = a 2'-deoxyribonucleoside 5'-phosphate + diphosphate + H(+). Functionally, nucleoside triphosphate pyrophosphatase. May have a dual role in cell division arrest and in preventing the incorporation of modified nucleotides into cellular nucleic acids. The sequence is that of Nucleoside triphosphate pyrophosphatase from Ehrlichia ruminantium (strain Gardel).